The primary structure comprises 232 residues: Lipoprotein-releasing system ATP-binding protein LolD (232 aa).

An ABC transporter domain is found at 11 to 232 (IEVTDLQRAF…LHDGRLIEEY (222 aa)). Residue 47–54 (GPSGAGKS) participates in ATP binding.

Belongs to the ABC transporter superfamily. Lipoprotein translocase (TC 3.A.1.125) family. In terms of assembly, the complex is composed of two ATP-binding proteins (LolD) and two transmembrane proteins (LolC and LolE).

It is found in the cell inner membrane. In terms of biological role, part of the ABC transporter complex LolCDE involved in the translocation of mature outer membrane-directed lipoproteins, from the inner membrane to the periplasmic chaperone, LolA. Responsible for the formation of the LolA-lipoprotein complex in an ATP-dependent manner. The polypeptide is Lipoprotein-releasing system ATP-binding protein LolD (Zymomonas mobilis subsp. mobilis (strain ATCC 31821 / ZM4 / CP4)).